The sequence spans 655 residues: MTECFLPPTSSPSEHRRVEHGSGLTRTPSSEEISPTKFPGLYRTGEPSPPHDILHEPPDVVSDDEKDHGKKKGKFKKKEKRTEGYAAFQEDSSGDEAESPSKMKRSKGIHVFKKPSFSKKKEKDFKIKEKPKEEKHKEEKHKEEKHKEKKSKDLTAADVVKQWKEKKKKKKPIQEPEVPQIDVPNLKPIFGIPLADAVERTMMYDGIRLPAVFRECIDYVEKYGMKCEGIYRVSGIKSKVDELKAAYDREESTNLEDYEPNTVASLLKQYLRDLPENLLTKELMPRFEEACGRTTETEKVQEFQRLLKELPECNYLLISWLIVHMDHVIAKELETKMNIQNISIVLSPTVQISNRVLYVFFTHVQELFGNVVLKQVMKPLRWSNMATMPTLPETQAGIKEEIRRQEFLLNCLHRDLQGGIKDLSKEERLWEVQRILTALKRKLREAKRQECETKIAQEIASLSKEDVSKEEMNENEEVINILLAQENEILTEQEELLAMEQFLRRQIASEKEEIERLRAEIAEIQSRQQHGRSETEEYSSESESESEDEEELQIILEDLQRQNEELEIKNNHLNQAIHEEREAIIELRVQLRLLQMQRAKAEQQAQEDEEPEWRGGAVQPPRDGVLEPKAAKEQPKAGKEPAKPSPSRDRKETSI.

The segment at 1 to 158 (MTECFLPPTS…KKSKDLTAAD (158 aa)) is disordered. Position 2 is an N-acetylthreonine (Thr2). Residues 24–33 (LTRTPSSEEI) show a composition bias toward polar residues. Residues Ser29, Ser30, and Ser34 each carry the phosphoserine modification. Thr44 is modified (phosphothreonine). 2 positions are modified to phosphoserine: Ser48 and Ser62. Over residues 52–68 (DILHEPPDVVSDDEKDH) the composition is skewed to basic and acidic residues. 69-74 (GKKKGK) contacts ATP. A compositionally biased stretch (basic residues) spans 69 to 79 (GKKKGKFKKKE). Phosphoserine occurs at positions 92 and 93. Residues 102-118 (KMKRSKGIHVFKKPSFS) show a composition bias toward basic residues. The tract at residues 102–119 (KMKRSKGIHVFKKPSFSK) is nuclear localization signal. Over residues 119–155 (KKKEKDFKIKEKPKEEKHKEEKHKEEKHKEKKSKDLT) the composition is skewed to basic and acidic residues. The tract at residues 154–219 (LTAADVVKQW…PAVFRECIDY (66 aa)) is mediates association with membranes and could form transmembrane domains. Residues 192–380 (IPLADAVERT…VVLKQVMKPL (189 aa)) enclose the Rho-GAP domain. The tract at residues 403–499 (RRQEFLLNCL…LTEQEELLAM (97 aa)) is mediates interaction with RALA and RALB. Residue 418–425 (GGIKDLSK) coordinates ATP. Phosphoserine is present on residues Ser461 and Ser463. The mediates interaction with REPS1 and REPS2 stretch occupies residues 500–655 (EQFLRRQIAS…PSRDRKETSI (156 aa)). 2 disordered regions span residues 525–551 (QSRQ…DEEE) and 601–655 (AEQQ…ETSI). Positions 536–551 (EEYSSESESESEDEEE) are enriched in acidic residues. Basic and acidic residues predominate over residues 624–655 (GVLEPKAAKEQPKAGKEPAKPSPSRDRKETSI). Phosphoserine is present on Ser645.

In terms of assembly, interacts with the GTP-bound form of RALA (via effector domain); during mitosis, recruits RALBP1 to the mitochondrion where it promotes DNM1L phosphorylation and mitochondrial fission. Interacts with DNM1L; mediates its mitotic kinase cyclin B-CDK1-mediated phosphorylation during mitosis to promote mitochondrial fission. Interacts with the mitotic kinase cyclin B-CDK1 during mitosis. Interacts with the GTP-bound form of RALB (via effector domain). Interacts with REPS1; the interaction is direct and does not affect RALA-binding nor GTPase activator activity of RALBP1. Interacts with REPS2; the interaction is direct and does not affect RALA-binding nor GTPase activator activity of RALBP1. Interacts with EPN1, NUMB and TFAP2A during interphase and mitosis. Interacts with AP2M1; as part of the AP2 complex. Interacts with CDC42. Interacts with RAC1. Tyrosine-phosphorylated upon stimulation of cells with EGF. In terms of processing, may undergo proteolytic cleavage to give peptides which reassemble to form a transporter complex. In terms of tissue distribution, expressed ubiquitously but at low levels. Shows a strong expression in the erythrocytes.

It is found in the cell membrane. The protein resides in the cytoplasm. It localises to the cytosol. Its subcellular location is the cytoskeleton. The protein localises to the spindle pole. It is found in the nucleus. The protein resides in the mitochondrion. The enzyme catalyses an S-substituted glutathione(in) + ATP + H2O = an S-substituted glutathione(out) + ADP + phosphate + H(+). It carries out the reaction ATP + H2O + xenobioticSide 1 = ADP + phosphate + xenobioticSide 2.. The catalysed reaction is leukotriene C4(in) + ATP + H2O = leukotriene C4(out) + ADP + phosphate + H(+). Functionally, multifunctional protein that functions as a downstream effector of RALA and RALB. As a GTPase-activating protein/GAP can inactivate CDC42 and RAC1 by stimulating their GTPase activity. As part of the Ral signaling pathway, may also regulate ligand-dependent EGF and insulin receptors-mediated endocytosis. During mitosis, may act as a scaffold protein in the phosphorylation of EPSIN/EPN1 by the mitotic kinase cyclin B-CDK1, preventing endocytosis during that phase of the cell cycle. During mitosis, also controls mitochondrial fission as an effector of RALA. Recruited to mitochondrion by RALA, acts as a scaffold to foster the mitotic kinase cyclin B-CDK1-mediated phosphorylation and activation of DNM1L. In terms of biological role, could also function as a primary ATP-dependent active transporter for glutathione conjugates of electrophiles. May also actively catalyze the efflux of a wide range of substrates including xenobiotics like doxorubicin (DOX) contributing to cell multidrug resistance. This chain is RalA-binding protein 1, found in Homo sapiens (Human).